The following is a 166-amino-acid chain: ATP synthase subunit b (166 aa).

A helical transmembrane segment spans residues 10–30 (LLFWMIVSFGIVFVILSKYGF).

The protein belongs to the ATPase B chain family. In terms of assembly, F-type ATPases have 2 components, F(1) - the catalytic core - and F(0) - the membrane proton channel. F(1) has five subunits: alpha(3), beta(3), gamma(1), delta(1), epsilon(1). F(0) has three main subunits: a(1), b(2) and c(10-14). The alpha and beta chains form an alternating ring which encloses part of the gamma chain. F(1) is attached to F(0) by a central stalk formed by the gamma and epsilon chains, while a peripheral stalk is formed by the delta and b chains.

It localises to the cell inner membrane. Functionally, f(1)F(0) ATP synthase produces ATP from ADP in the presence of a proton or sodium gradient. F-type ATPases consist of two structural domains, F(1) containing the extramembraneous catalytic core and F(0) containing the membrane proton channel, linked together by a central stalk and a peripheral stalk. During catalysis, ATP synthesis in the catalytic domain of F(1) is coupled via a rotary mechanism of the central stalk subunits to proton translocation. Component of the F(0) channel, it forms part of the peripheral stalk, linking F(1) to F(0). The protein is ATP synthase subunit b of Parabacteroides distasonis (strain ATCC 8503 / DSM 20701 / CIP 104284 / JCM 5825 / NCTC 11152).